Consider the following 838-residue polypeptide: Xyloglucanase (838 aa).

The signal sequence occupies residues 1 to 19 (MKVSRVLALVLGAVIPAHA). Residue D53 is the Nucleophile of the active site. N-linked (GlcNAc...) asparagine glycans are attached at residues N232 and N436. The active-site Proton donor is the D469. The disordered stretch occupies residues 750-801 (GTGGTSSSTKQSSSSTSSASSSTTLRSSVVSTTRASTVTSSRTSSAAGPTGS). Positions 754–797 (TSSSTKQSSSSTSSASSSTTLRSSVVSTTRASTVTSSRTSSAAG) are enriched in low complexity. One can recognise a CBM1 domain in the interval 802–838 (GVAGHYAQCGGIGWTGPTQCVAPYVCQKQNDYYYQCV).

The protein belongs to the glycosyl hydrolase 74 family.

It carries out the reaction Hydrolysis of (1-&gt;4)-D-glucosidic linkages in xyloglucans so as to successively remove oligosaccharides from the newly-formed chain end after endo-initiation on a polymer molecule.. In terms of biological role, hydrolyzes the glucosidic bonds of unbranched Glc residues in tamarind seed xyloglucan, producing XXXG, XLXG, XXLG and XLLG. Has a low activity against beta-glucan and carboxymethylcellulose. Not active against Avicel, laminarin, xylan, galactomannan, linear and branched arabinans, galactan, polygalacturonic acid, starch, beta-D-Glcp, beta-D-cellobiose, beta-D-Galp, beta-D-Xylp, alpha-D-Xylp, alpha-L-Araf and alpha-L-Arap. The sequence is that of Xyloglucanase from Hypocrea jecorina (strain QM6a) (Trichoderma reesei).